The following is a 171-amino-acid chain: Glucagon family neuropeptides (171 aa).

A signal peptide spans 1–22 (MYRKALLVWLLVYGIMRCTVHS). Residues 23–76 (SPTALKYPALRLEDEVYDEDGNTLPDFAFDNNPIGIGNPASVFDDMYSFYYPAE) constitute a propeptide that is removed on maturation. The important for receptor binding stretch occupies residues 145–153 (VKKYLAAVL). Lysine amide is present on Lys164. A propeptide spanning residues 168 to 171 (VAYL) is cleaved from the precursor.

It belongs to the glucagon family.

Its subcellular location is the secreted. Functionally, primary role of GRF is to release GH from the pituitary. Its function is as follows. PACAP is a neuropeptide involved in diverse array of physiological processes through activating the PACAP subfamily of class B1 G protein-coupled receptors: VIP receptor 1 (VIPR1), VIP receptor 2 (VIPR2), and PACAP type I receptor (ADCYAP1R1). Exerts neuroprotective and general cytoprotective effects due to anti-apoptotic, anti-inflammatory, and antioxidant actions. The sequence is that of Glucagon family neuropeptides (adcyap1) from Pelophylax ridibundus (Marsh frog).